A 79-amino-acid polypeptide reads, in one-letter code: MSAKKSPEELKGIFEKYAAKEGDPNQLSKEELKLLLQTEFPSLLKGPSTLDELFEELDKNGDGEVSFEEFQVLVKKISQ.

Ser-2 is modified (N-acetylserine). EF-hand domains follow at residues 13–48 (IFEKYAAKEGDPNQLSKEELKLLLQTEFPSLLKGPS) and 45–79 (KGPSTLDELFEELDKNGDGEVSFEEFQVLVKKISQ). Positions 26 and 31 each coordinate Ca(2+). Residue Ser-42 is modified to Phosphoserine. Ca(2+)-binding residues include Asp-58, Asn-60, Asp-62, Glu-64, and Glu-69.

This sequence belongs to the S-100 family.

The sequence is that of Protein S100-G (S100G) from Bos taurus (Bovine).